Reading from the N-terminus, the 534-residue chain is Apolipoprotein N-acyltransferase (534 aa).

The next 7 helical transmembrane spans lie at 18–38 (LLAI…GFFA), 39–59 (AMFL…ASPD), 74–94 (WLFG…ALLV), 105–125 (LAIL…VALA), 127–147 (IFWS…GLME), 178–198 (VIGA…PALA), and 209–229 (ALAV…LYVA). The 251-residue stretch at 246–496 (VQPDIDQAAK…TGFIDATVDR (251 aa)) folds into the CN hydrolase domain. Catalysis depends on glutamate 291, which acts as the Proton acceptor. The active site involves lysine 355. The Nucleophile role is filled by cysteine 408. Residues 504–524 (TFPRQTYFWLTEALLILIALV) traverse the membrane as a helical segment.

The protein belongs to the CN hydrolase family. Apolipoprotein N-acyltransferase subfamily.

The protein localises to the cell inner membrane. The enzyme catalyses N-terminal S-1,2-diacyl-sn-glyceryl-L-cysteinyl-[lipoprotein] + a glycerophospholipid = N-acyl-S-1,2-diacyl-sn-glyceryl-L-cysteinyl-[lipoprotein] + a 2-acyl-sn-glycero-3-phospholipid + H(+). Its pathway is protein modification; lipoprotein biosynthesis (N-acyl transfer). Functionally, catalyzes the phospholipid dependent N-acylation of the N-terminal cysteine of apolipoprotein, the last step in lipoprotein maturation. This is Apolipoprotein N-acyltransferase from Rhizobium leguminosarum bv. trifolii (strain WSM2304).